Consider the following 472-residue polypeptide: Probable dipeptidase A (472 aa).

Cys-10 is an active-site residue.

This sequence belongs to the peptidase C69 family.

It carries out the reaction an L-aminoacyl-L-amino acid + H2O = 2 an L-alpha-amino acid. The chain is Probable dipeptidase A (pepDA) from Streptococcus pyogenes serotype M18 (strain MGAS8232).